We begin with the raw amino-acid sequence, 347 residues long: Selenide, water dikinase (347 aa).

Cys-17 is an active-site residue. Residues Lys-20 and 48 to 50 (TRD) contribute to the ATP site. Asp-51 provides a ligand contact to Mg(2+). ATP is bound by residues Asp-68, Asp-91, and 139 to 141 (GHS). A Mg(2+)-binding site is contributed by Asp-91. Asp-227 contributes to the Mg(2+) binding site.

This sequence belongs to the selenophosphate synthase 1 family. Class I subfamily. As to quaternary structure, homodimer. The cofactor is Mg(2+).

It carries out the reaction hydrogenselenide + ATP + H2O = selenophosphate + AMP + phosphate + 2 H(+). Its function is as follows. Synthesizes selenophosphate from selenide and ATP. In Escherichia coli O157:H7, this protein is Selenide, water dikinase.